The chain runs to 98 residues: C-X-C motif chemokine 10 (98 aa).

An N-terminal signal peptide occupies residues 1–21 (MNQTAILICCLVFLTLSGIQG). Position 26 is a citrulline (R26). Intrachain disulfides connect C30/C57 and C32/C74.

This sequence belongs to the intercrine alpha (chemokine CxC) family.

Its subcellular location is the secreted. In terms of biological role, chemotactic for monocytes and T-lymphocytes. Binds to CXCR3. This chain is C-X-C motif chemokine 10 (CXCL10), found in Macaca nemestrina (Pig-tailed macaque).